The primary structure comprises 145 residues: Endoribonuclease YbeY (145 aa).

Residues His109, His113, and His119 each contribute to the Zn(2+) site.

This sequence belongs to the endoribonuclease YbeY family. Zn(2+) serves as cofactor.

The protein resides in the cytoplasm. In terms of biological role, single strand-specific metallo-endoribonuclease involved in late-stage 70S ribosome quality control and in maturation of the 3' terminus of the 16S rRNA. In Vesicomyosocius okutanii subsp. Calyptogena okutanii (strain HA), this protein is Endoribonuclease YbeY.